Reading from the N-terminus, the 145-residue chain is D-aminoacyl-tRNA deacylase (145 aa).

A Gly-cisPro motif, important for rejection of L-amino acids motif is present at residues 137 to 138 (GP).

It belongs to the DTD family. As to quaternary structure, homodimer.

It is found in the cytoplasm. It carries out the reaction glycyl-tRNA(Ala) + H2O = tRNA(Ala) + glycine + H(+). It catalyses the reaction a D-aminoacyl-tRNA + H2O = a tRNA + a D-alpha-amino acid + H(+). In terms of biological role, an aminoacyl-tRNA editing enzyme that deacylates mischarged D-aminoacyl-tRNAs. Also deacylates mischarged glycyl-tRNA(Ala), protecting cells against glycine mischarging by AlaRS. Acts via tRNA-based rather than protein-based catalysis; rejects L-amino acids rather than detecting D-amino acids in the active site. By recycling D-aminoacyl-tRNA to D-amino acids and free tRNA molecules, this enzyme counteracts the toxicity associated with the formation of D-aminoacyl-tRNA entities in vivo and helps enforce protein L-homochirality. The sequence is that of D-aminoacyl-tRNA deacylase from Lactobacillus acidophilus (strain ATCC 700396 / NCK56 / N2 / NCFM).